A 551-amino-acid polypeptide reads, in one-letter code: Arginine--tRNA ligase (551 aa).

The 'HIGH' region motif lies at 124–134 (ANPTGPLHIGH).

It belongs to the class-I aminoacyl-tRNA synthetase family. In terms of assembly, monomer.

The protein localises to the cytoplasm. The enzyme catalyses tRNA(Arg) + L-arginine + ATP = L-arginyl-tRNA(Arg) + AMP + diphosphate. The chain is Arginine--tRNA ligase from Solidesulfovibrio magneticus (strain ATCC 700980 / DSM 13731 / RS-1) (Desulfovibrio magneticus).